The chain runs to 220 residues: CRISPR system Cms endoribonuclease Csm3 (220 aa).

It belongs to the CRISPR-associated Csm3 family. In terms of assembly, part of the Csm effector complex that includes at least Cas10(1), Csm2(3), Csm3(5), Csm4(1), Csm5(1) and mature crRNA. The Csm complex is elongated and slightly twisted with a maximal length of 215 Angstroms and a diameter of 75-80 Angstroms. It has been modeled to have a central protein filamant of Csm3 subunits along which the dsRNA helix of paired crRNA and target RNA binds. The filament is capped at one end by Cas10 and Csm4 and at the other end by Csm5; ssDNA is thought to bind to the N-terminal HD domain of Cas10. Csm with a precursor crRNA does not include Csm5, while Cas6, the enzyme probably involved in pre-crRNA processing, is found associated with a subset of the Csm complex. A metal cation is required as a cofactor.

Its activity is regulated as follows. Target ssRNase is inhibited by EDTA. In terms of biological role, CRISPR (clustered regularly interspaced short palindromic repeat) is an adaptive immune system that provides protection against mobile genetic elements (viruses, transposable elements and conjugative plasmids). CRISPR clusters contain spacers, sequences complementary to antecedent mobile elements, and target invading nucleic acids. CRISPR clusters are transcribed and processed into CRISPR RNA (crRNA). The type III-A Csm effector complex binds crRNA and acts as a crRNA-guided RNase, DNase and cyclic oligoadenylate synthase; binding of target RNA cognate to the crRNA is required for all activities. In a heterologous host this Csm effector complex restricts ssRNA phage MS2, suggesting it may target RNA viruses in vivo. Csm functions as a non-specific ssDNase. Base-pairing between crRNA and target RNA to form a ternary Csm complex activates a ssDNase activity; target RNA cleavage suppresses the ssDNase, a temporal control that prevents uncontrolled DNA degradation. Viral RNA transcripts probably tether the Csm complex to the viral genome, recruiting Cas10 ssDNA activity which is able to degrade DNA in the transcription bubble, spatially controlling the DNase activity. Functionally, this subunit has the target ssRNA endonuclease activity; it cleaves multiple sites in the target RNA at 6 nucleotide intervals. The number of cleavage sites in the target RNA correlates with the number of Csm3 subunits in the Csm effector complex. In the Csm complex target RNA and ssDNA are cleaved simultaneously, although RNase activity (of Csm3) is much faster. RNA cleavage by Csm3 is not required for ssDNase activity as Csm complex with inactive Csm3 still has ssDNase activity; however as the cleaved target RNA products dissociate away ssDNase activity decreases. This is CRISPR system Cms endoribonuclease Csm3 from Streptococcus thermophilus.